We begin with the raw amino-acid sequence, 101 residues long: uncharacterized protein (101 aa).

This is an uncharacterized protein from Enterobacteria phage T3 (Bacteriophage T3).